Consider the following 478-residue polypeptide: Adenosylhomocysteinase (478 aa).

Thr57, Asp139, and Glu201 together coordinate substrate. 202–204 (TTT) is a binding site for NAD(+). The substrate site is built by Lys231 and Asp235. NAD(+) is bound by residues Asn236, 265–270 (GYGDVG), Glu288, Asn323, 344–346 (IGH), and Asn392.

It belongs to the adenosylhomocysteinase family. NAD(+) serves as cofactor.

The protein resides in the cytoplasm. It catalyses the reaction S-adenosyl-L-homocysteine + H2O = L-homocysteine + adenosine. It functions in the pathway amino-acid biosynthesis; L-homocysteine biosynthesis; L-homocysteine from S-adenosyl-L-homocysteine: step 1/1. In terms of biological role, may play a key role in the regulation of the intracellular concentration of adenosylhomocysteine. This is Adenosylhomocysteinase from Corynebacterium efficiens (strain DSM 44549 / YS-314 / AJ 12310 / JCM 11189 / NBRC 100395).